Consider the following 97-residue polypeptide: Aspartyl/glutamyl-tRNA(Asn/Gln) amidotransferase subunit C (97 aa).

Residues 58–78 form a disordered region; that stretch reads LPQGRLRKDTPRDPLDRENAL. The span at 63-77 shows a compositional bias: basic and acidic residues; it reads LRKDTPRDPLDRENA.

The protein belongs to the GatC family. As to quaternary structure, heterotrimer of A, B and C subunits.

The catalysed reaction is L-glutamyl-tRNA(Gln) + L-glutamine + ATP + H2O = L-glutaminyl-tRNA(Gln) + L-glutamate + ADP + phosphate + H(+). It carries out the reaction L-aspartyl-tRNA(Asn) + L-glutamine + ATP + H2O = L-asparaginyl-tRNA(Asn) + L-glutamate + ADP + phosphate + 2 H(+). Functionally, allows the formation of correctly charged Asn-tRNA(Asn) or Gln-tRNA(Gln) through the transamidation of misacylated Asp-tRNA(Asn) or Glu-tRNA(Gln) in organisms which lack either or both of asparaginyl-tRNA or glutaminyl-tRNA synthetases. The reaction takes place in the presence of glutamine and ATP through an activated phospho-Asp-tRNA(Asn) or phospho-Glu-tRNA(Gln). The chain is Aspartyl/glutamyl-tRNA(Asn/Gln) amidotransferase subunit C from Saccharolobus islandicus (strain Y.N.15.51 / Yellowstone #2) (Sulfolobus islandicus).